Here is a 155-residue protein sequence, read N- to C-terminus: DNA-binding protein inhibitor ID-1 (155 aa).

The bHLH domain occupies 53–105 (LPALLDEQQVNVLLYDMNGCYSRLKELVPTLPQNRKVSKVEILQHVIDYIRDL). A Nuclear export signal motif is present at residues 98-111 (VIDYIRDLQLELNS).

Heterodimer with other HLH proteins. Interacts with COPS5, IFI204, GATA4 and NKX2-5. Interacts with CLOCK and BMAL1.

The protein localises to the cytoplasm. It localises to the nucleus. Transcriptional regulator (lacking a basic DNA binding domain) which negatively regulates the basic helix-loop-helix (bHLH) transcription factors by forming heterodimers and inhibiting their DNA binding and transcriptional activity. Implicated in regulating a variety of cellular processes, including cellular growth, senescence, differentiation, apoptosis, angiogenesis, and neoplastic transformation. Inhibits skeletal muscle and cardiac myocyte differentiation. Regulates the circadian clock by repressing the transcriptional activator activity of the CLOCK-BMAL1 heterodimer. The protein is DNA-binding protein inhibitor ID-1 (ID1) of Homo sapiens (Human).